The chain runs to 183 residues: Protein Dr1 (183 aa).

The 64-residue stretch at 19–82 (TLPRASINKI…INAEHVLEAL (64 aa)) folds into the Histone-fold domain. Residues 92–183 (QEAEAVLHDC…DDDDDDDDDY (92 aa)) are repression of TATA-containing promoters. The segment at 155–183 (AMVQRPPLADGSVASKPSEDDDDDDDDDY) is disordered. The span at 173-183 (EDDDDDDDDDY) shows a compositional bias: acidic residues.

This sequence belongs to the NC2 beta/DR1 family. Component of the Ada2a-containing (ATAC) complex composed of at least Ada2a, Atac1, Hcf, Ada3, Gcn5, Mocs2B, Charac-14, Atac3, Atac2, NC2beta and wds. Homodimer. Interacts with NC2-alpha/Drap1 to form the dNC2 complex.

It localises to the nucleus. Its function is as follows. Bifunctional basic transcription factor. Activates transcription of DPE (Downstream Promoter Element) containing promoters while repressing transcription of promoters which contain TATA elements. Together with Chrac-14, promotes nucleosome sliding of ATP-dependent nucleosome remodeling complexes. The chain is Protein Dr1 (NC2beta) from Drosophila melanogaster (Fruit fly).